We begin with the raw amino-acid sequence, 319 residues long: Dehydrogenase/reductase SDR family member 9 (319 aa).

The first 17 residues, 1–17 (MLFWLLVLLILCGFLWN), serve as a signal peptide directing secretion. Residues 34-58 (ITGC…HVIA) and aspartate 83 each bind NAD(+). Serine 164 lines the substrate pocket. Tyrosine 176 serves as the catalytic Proton acceptor. Lysine 180 lines the NAD(+) pocket.

This sequence belongs to the short-chain dehydrogenases/reductases (SDR) family. In terms of assembly, homotetramer.

The protein resides in the microsome membrane. It is found in the endoplasmic reticulum membrane. It carries out the reaction 3beta-hydroxy-5alpha-pregnane-20-one + NAD(+) = 5alpha-pregnane-3,20-dione + NADH + H(+). The catalysed reaction is 17beta-hydroxy-5alpha-androstan-3-one + NAD(+) = 5alpha-androstan-3,17-dione + NADH + H(+). It catalyses the reaction androsterone + NAD(+) = 5alpha-androstan-3,17-dione + NADH + H(+). The enzyme catalyses 5alpha-androstane-3alpha,17beta-diol + NAD(+) = 17beta-hydroxy-5alpha-androstan-3-one + NADH + H(+). It carries out the reaction all-trans-retinol + NAD(+) = all-trans-retinal + NADH + H(+). The catalysed reaction is 3alpha-hydroxy-5alpha-pregnan-20-one + NAD(+) = 5alpha-pregnane-3,20-dione + NADH + H(+). In terms of biological role, 3-alpha-hydroxysteroid dehydrogenase that converts 3-alpha-tetrahydroprogesterone (allopregnanolone) to dihydroxyprogesterone and 3-alpha-androstanediol to dihydroxyprogesterone. Also plays a role in the biosynthesis of retinoic acid from retinaldehyde. Can utilize both NADH and NADPH. This is Dehydrogenase/reductase SDR family member 9 (DHRS9) from Bos taurus (Bovine).